Reading from the N-terminus, the 284-residue chain is 16S rRNA (guanine(1405)-N(7))-methyltransferase (284 aa).

S-adenosyl-L-methionine is bound by residues Tyr73, 111-113, Arg117, Ala142, Asp165, 191-192, Leu208, and Gln217; these read HAS and DL.

The protein belongs to the methyltransferase superfamily. Aminoglycoside resistance family.

It catalyses the reaction guanosine(1405) in 16S rRNA + S-adenosyl-L-methionine = N(7)-methylguanosine(1405) in 16S rRNA + S-adenosyl-L-homocysteine. Its function is as follows. Specifically methylates the N(7) position of guanine 1405 in 16S rRNA. Confers resistance to various aminoglycosides, including gentamicin and kanamycin. This is 16S rRNA (guanine(1405)-N(7))-methyltransferase (Krm) from Frankia casuarinae (strain DSM 45818 / CECT 9043 / HFP020203 / CcI3).